We begin with the raw amino-acid sequence, 45 residues long: Photosystem II reaction center protein K (45 aa).

Positions 1–8 (METIYLLA) are excised as a propeptide. A helical membrane pass occupies residues 16–40 (IFDPLVDVLPVIPLFFLALAFVWQA).

Belongs to the PsbK family. In terms of assembly, PSII is composed of 1 copy each of membrane proteins PsbA, PsbB, PsbC, PsbD, PsbE, PsbF, PsbH, PsbI, PsbJ, PsbK, PsbL, PsbM, PsbT, PsbX, PsbY, PsbZ, Psb30/Ycf12, peripheral proteins PsbO, CyanoQ (PsbQ), PsbU, PsbV and a large number of cofactors. It forms dimeric complexes.

It localises to the cellular thylakoid membrane. Its function is as follows. One of the components of the core complex of photosystem II (PSII). PSII is a light-driven water:plastoquinone oxidoreductase that uses light energy to abstract electrons from H(2)O, generating O(2) and a proton gradient subsequently used for ATP formation. It consists of a core antenna complex that captures photons, and an electron transfer chain that converts photonic excitation into a charge separation. The chain is Photosystem II reaction center protein K from Synechocystis sp. (strain ATCC 27184 / PCC 6803 / Kazusa).